The following is a 177-amino-acid chain: MKLPKEGDFITIQSYKHDGNLHRTWRDTMVLKTTENAIIGVNDHTLVTESDGRRWVTREPAIVYFHKKYWFNIIAMIRDNGTSYYCNLASPYYLDNEALKYIDYDLDVKVFADGEKRLLDVEEYERHKKQMHYSDDLDFILKENVKILVDWINNGRGPFSDAYVNIWYKRYVELKNR.

The Proton donor role is filled by arginine 23. The Mg(2+) site is built by asparagine 87, aspartate 103, aspartate 105, aspartate 107, aspartate 120, and glutamate 123.

This sequence belongs to the Ntdp family. Mg(2+) serves as cofactor.

It carries out the reaction a ribonucleoside 5'-triphosphate + H2O = a ribonucleoside 5'-diphosphate + phosphate + H(+). The catalysed reaction is a ribonucleoside 5'-diphosphate + H2O = a ribonucleoside 5'-phosphate + phosphate + H(+). In terms of biological role, has nucleoside phosphatase activity towards nucleoside triphosphates and nucleoside diphosphates. The protein is Nucleoside triphosphate/diphosphate phosphatase of Streptococcus sanguinis (strain SK36).